Consider the following 547-residue polypeptide: Chorismate synthase (547 aa).

Residues His17, His104, and Asp500 contribute to the active site.

Belongs to the chorismate synthase family.

It is found in the cytoplasm. Its subcellular location is the cytosol. The enzyme catalyses 5-O-(1-carboxyvinyl)-3-phosphoshikimate = chorismate + phosphate. It catalyses the reaction FMNH2 + NADP(+) = FMN + NADPH + 2 H(+). It participates in metabolic intermediate biosynthesis; chorismate biosynthesis; chorismate from D-erythrose 4-phosphate and phosphoenolpyruvate: step 7/7. Its function is as follows. Bifunctional chorismate synthase and flavin reductase. Catalyzes the conversion of 5-enolpyruvylshikimate 3-phosphate (EPSP) to form chorismate. Acts also as a flavin reductase (FR) able to generate reduced flavin mononucleotide in the presence of NADPH. This Plasmodium vivax (strain Salvador I) protein is Chorismate synthase.